Reading from the N-terminus, the 204-residue chain is GTP cyclohydrolase 1 (204 aa).

Zn(2+) contacts are provided by cysteine 92, histidine 95, and cysteine 165.

The protein belongs to the GTP cyclohydrolase I family. In terms of assembly, homomer.

The catalysed reaction is GTP + H2O = 7,8-dihydroneopterin 3'-triphosphate + formate + H(+). The protein operates within cofactor biosynthesis; 7,8-dihydroneopterin triphosphate biosynthesis; 7,8-dihydroneopterin triphosphate from GTP: step 1/1. The chain is GTP cyclohydrolase 1 from Mycobacteroides abscessus (strain ATCC 19977 / DSM 44196 / CCUG 20993 / CIP 104536 / JCM 13569 / NCTC 13031 / TMC 1543 / L948) (Mycobacterium abscessus).